A 371-amino-acid chain; its full sequence is Deoxyhypusine synthase (371 aa).

NAD(+) contacts are provided by residues 107–111, 133–135, Glu139, and Asp240; these read SNLIS and TTG. Position 138–139 (138–139) interacts with spermidine; it reads EE. Asp245 contributes to the spermidine binding site. Gly287 serves as a coordination point for NAD(+). His292 contributes to the spermidine binding site. Residue 312–313 coordinates NAD(+); that stretch reads TA. Residues 318-320 and 327-333 contribute to the spermidine site; these read GSD and EAVSWGK. Residue Lys333 is the Nucleophile of the active site. 346–347 serves as a coordination point for NAD(+); the sequence is DA.

Belongs to the deoxyhypusine synthase family. NAD(+) serves as cofactor. As to expression, expressed in shoot tips.

The enzyme catalyses [eIF5A protein]-L-lysine + spermidine = [eIF5A protein]-deoxyhypusine + propane-1,3-diamine. It functions in the pathway protein modification; eIF5A hypusination. Functionally, catalyzes the NAD-dependent oxidative cleavage of spermidine and the subsequent transfer of the butylamine moiety of spermidine to the epsilon-amino group of a specific lysine residue of the eIF-5A precursor protein to form the intermediate deoxyhypusine residue. Also able to produce homospermidine from putrescine. In Senecio vernalis (Spring groundsel), this protein is Deoxyhypusine synthase (DHS1).